The sequence spans 294 residues: tRNA-cytidine(32) 2-sulfurtransferase (294 aa).

The PP-loop motif motif lies at 58–63; that stretch reads SGGKDS. 3 residues coordinate [4Fe-4S] cluster: Cys133, Cys136, and Cys224.

The protein belongs to the TtcA family. In terms of assembly, homodimer. The cofactor is Mg(2+). [4Fe-4S] cluster serves as cofactor.

The protein resides in the cytoplasm. The catalysed reaction is cytidine(32) in tRNA + S-sulfanyl-L-cysteinyl-[cysteine desulfurase] + AH2 + ATP = 2-thiocytidine(32) in tRNA + L-cysteinyl-[cysteine desulfurase] + A + AMP + diphosphate + H(+). It participates in tRNA modification. Catalyzes the ATP-dependent 2-thiolation of cytidine in position 32 of tRNA, to form 2-thiocytidine (s(2)C32). The sulfur atoms are provided by the cysteine/cysteine desulfurase (IscS) system. This Ruegeria pomeroyi (strain ATCC 700808 / DSM 15171 / DSS-3) (Silicibacter pomeroyi) protein is tRNA-cytidine(32) 2-sulfurtransferase.